A 286-amino-acid chain; its full sequence is Urease accessory protein UreD (286 aa).

The protein belongs to the UreD family. As to quaternary structure, ureD, UreF and UreG form a complex that acts as a GTP-hydrolysis-dependent molecular chaperone, activating the urease apoprotein by helping to assemble the nickel containing metallocenter of UreC. The UreE protein probably delivers the nickel.

It localises to the cytoplasm. In terms of biological role, required for maturation of urease via the functional incorporation of the urease nickel metallocenter. This is Urease accessory protein UreD from Rhodopseudomonas palustris (strain BisA53).